The following is a 377-amino-acid chain: MAAAAQSRVVRVLSMSRSAITAIATSVCHGPPRRQLHHALIPHGKGGRSSVSGIVATVFGATGFLGRYVVNHLGRMGSQVIIPYRCDTYDIMHLRPMGDLGQLLFLEWDARDKDSIRRVVQHSNVVINLIGRDWETRNFDFEDVFVKIPQAIAQLSKEAGVEKFIHVSHLNANIKSSSRYLRNKAVGEKVVRDAFPEAIIIKPSDIFGREDRFLNSFASMHRFGPTPLGSLGWKTVKQPVYVVDVSKGIVNAVKDPDANGKSFAFVGPNRYLLFHLVKYIFAVAHRLFLPFPLPLFAYRWVARVFEISPFEPWITRDKVERMHITDMKLPHLPGLEDLGIQATPLELKAIEVLRRHRTYRWLSAEIEDVKPAKTVNI.

Residues 1–35 (MAAAAQSRVVRVLSMSRSAITAIATSVCHGPPRRQ) constitute a mitochondrion transit peptide. Lys-175 carries the post-translational modification N6-succinyllysine. 2 positions are modified to N6-acetyllysine: Lys-189 and Lys-370.

The protein belongs to the complex I NDUFA9 subunit family. Complex I is composed of 45 different subunits. This a component of the hydrophobic protein fraction. Interacts with BLOC1S1. Interacts with SLC2A4. Interacts with CLOCK. Interacts with RAB5IF. The cofactor is FAD. In terms of processing, acetylated on lysine residues. BLOC1S1 is required for acetylation. Acetylated by CLOCK in a circadian manner.

It is found in the mitochondrion matrix. In terms of biological role, accessory subunit of the mitochondrial membrane respiratory chain NADH dehydrogenase (Complex I), that is believed not to be involved in catalysis. Complex I functions in the transfer of electrons from NADH to the respiratory chain. The immediate electron acceptor for the enzyme is believed to be ubiquinone. This chain is NADH dehydrogenase [ubiquinone] 1 alpha subcomplex subunit 9, mitochondrial (NDUFA9), found in Pongo abelii (Sumatran orangutan).